The primary structure comprises 87 residues: uncharacterized protein (87 aa).

The next 2 helical transmembrane spans lie at 25–45 and 53–73; these read LVAAVIAVTMALWLGVQWLGG and YAFLADLAAIGALIWSLLVTF.

The protein resides in the cell membrane. This is an uncharacterized protein from Paracoccus denitrificans.